We begin with the raw amino-acid sequence, 334 residues long: Ventral anterior homeobox 1 (334 aa).

Residues 1–34 are compositionally biased toward basic and acidic residues; the sequence is MFGKPDKMDVRCHSDAEAARVSKNAHKESRESKG. The segment at 1-41 is disordered; sequence MFGKPDKMDVRCHSDAEAARVSKNAHKESRESKGAEGNLPA. The segment at residues 100–159 is a DNA-binding region (homeobox); it reads PKRTRTSFTAEQLYRLEMEFQRCQYVVGRERTELARQLNLSETQVKVWFQNRRTKQKKDQ. Disordered stretches follow at residues 234-263 and 314-334; these read PGPA…GLHA and SAFE…KALD. Positions 323 to 334 are enriched in basic and acidic residues; sequence NNKEGAEKKALD.

This sequence belongs to the EMX homeobox family.

The protein resides in the nucleus. Its function is as follows. Transcription factor that may function in dorsoventral specification of the forebrain. Required for axon guidance and major tract formation in the developing forebrain. May contribute to the differentiation of the neuroretina, pigmented epithelium and optic stalk. The chain is Ventral anterior homeobox 1 (VAX1) from Homo sapiens (Human).